Here is a 180-residue protein sequence, read N- to C-terminus: NADH-quinone oxidoreductase subunit I (180 aa).

4Fe-4S ferredoxin-type domains lie at 48–80 and 90–119; these read IVLT…LQKS and EFFR…LTPD. 8 residues coordinate [4Fe-4S] cluster: Cys60, Cys63, Cys66, Cys70, Cys99, Cys102, Cys105, and Cys109. The span at 161–174 shows a compositional bias: basic and acidic residues; sequence KPKGDAENEAKPID. Residues 161–180 are disordered; the sequence is KPKGDAENEAKPIDVKSLLP.

It belongs to the complex I 23 kDa subunit family. As to quaternary structure, NDH-1 is composed of 13 different subunits. Subunits NuoA, H, J, K, L, M, N constitute the membrane sector of the complex. [4Fe-4S] cluster serves as cofactor.

It is found in the cell inner membrane. The catalysed reaction is a quinone + NADH + 5 H(+)(in) = a quinol + NAD(+) + 4 H(+)(out). NDH-1 shuttles electrons from NADH, via FMN and iron-sulfur (Fe-S) centers, to quinones in the respiratory chain. The immediate electron acceptor for the enzyme in this species is believed to be ubiquinone. Couples the redox reaction to proton translocation (for every two electrons transferred, four hydrogen ions are translocated across the cytoplasmic membrane), and thus conserves the redox energy in a proton gradient. The polypeptide is NADH-quinone oxidoreductase subunit I (Shewanella oneidensis (strain ATCC 700550 / JCM 31522 / CIP 106686 / LMG 19005 / NCIMB 14063 / MR-1)).